The sequence spans 61 residues: Large ribosomal subunit protein bL28 (61 aa).

The interval 1-26 (MAKDFLNGKRTHFGNKRSHALNSSRR) is disordered. A compositionally biased stretch (basic residues) spans 9-19 (KRTHFGNKRSH).

This sequence belongs to the bacterial ribosomal protein bL28 family.

This Levilactobacillus brevis (strain ATCC 367 / BCRC 12310 / CIP 105137 / JCM 1170 / LMG 11437 / NCIMB 947 / NCTC 947) (Lactobacillus brevis) protein is Large ribosomal subunit protein bL28.